The chain runs to 293 residues: Lymphocyte antigen 6 complex locus protein G6f (293 aa).

Positions 1 to 19 (MAMVVFLLLYLCGHPQAAA) are cleaved as a signal peptide. One can recognise an Ig-like V-type domain in the interval 20-124 (DNIQTLYVPS…HKYQNWRVYD (105 aa)). Residues 20–237 (DNIQTLYVPS…APLPSWDVSW (218 aa)) are Extracellular-facing. A disulfide bond links Cys-37 and Cys-108. Asn-90 carries an N-linked (GlcNAc...) asparagine glycan. Residues 238–258 (ILMLLFAAGQGVTIIALSIVI) form a helical membrane-spanning segment. Residues 259-293 (WRHQRAQGTQDREPSIPHFKPEVQVYENIHLARLR) are Cytoplasmic-facing. Tyr-284 carries the post-translational modification Phosphotyrosine.

In terms of assembly, homodimer; disulfide-linked. Interacts with GRB2 and GRB7 in a phosphorylation-dependent manner. N-glycosylated.

The protein resides in the cell membrane. May play a role in the downstream signal transduction pathways involving GRB2 and GRB7. This Rattus norvegicus (Rat) protein is Lymphocyte antigen 6 complex locus protein G6f (Ly6g6f).